We begin with the raw amino-acid sequence, 449 residues long: Zinc finger and BTB domain-containing protein 14 (449 aa).

Positions 36 to 102 (CDIAIVVEDV…MYTAKISVKK (67 aa)) constitute a BTB domain. A Glycyl lysine isopeptide (Lys-Gly) (interchain with G-Cter in SUMO2) cross-link involves residue K46. The Nuclear localization signal signature appears at 50-66 (HRCVLAACSTYFKKLFK). The segment at 156 to 194 (ADAQDDDVEEIGDQDDSPSDDTVEGTPPSQEDGKSPTTT) is disordered. Positions 157–178 (DAQDDDVEEIGDQDDSPSDDTV) are enriched in acidic residues. Residues K203 and K249 each participate in a glycyl lysine isopeptide (Lys-Gly) (interchain with G-Cter in SUMO2) cross-link. 5 consecutive C2H2-type zinc fingers follow at residues 277 to 304 (IACQ…ADRP), 305 to 332 (FVCE…GYKP), 333 to 360 (YSCE…NERP), 361 to 388 (FACH…GEKP), and 389 to 417 (FVCG…ERKQ). The segment covering 405–417 (KRHENNMHSERKQ) has biased composition (basic and acidic residues). The segment at 405 to 424 (KRHENNMHSERKQVTPSAIQ) is disordered.

The protein belongs to the krueppel C2H2-type zinc-finger protein family. As to quaternary structure, interacts with ZBTB21. As to expression, ubiquitous.

The protein resides in the nucleus. Its function is as follows. Transcriptional activator of the dopamine transporter (DAT), binding it's promoter at the consensus sequence 5'-CCTGCACAGTTCACGGA-3'. Binds to 5'-d(GCC)(n)-3' trinucleotide repeats in promoter regions and acts as a repressor of the FMR1 gene. Transcriptional repressor of MYC and thymidine kinase promoters. In Mus musculus (Mouse), this protein is Zinc finger and BTB domain-containing protein 14 (Zbtb14).